Here is a 536-residue protein sequence, read N- to C-terminus: Uridine 5'-monophosphate transferase (536 aa).

The segment at 22–84 (ADHPTHTPED…GLQQCSSSPS (63 aa)) is disordered. Polar residues predominate over residues 31–45 (DSPQTVPSPRSSSAH). Residues 48-60 (EIQELRSLQETRP) are compositionally biased toward basic and acidic residues. Residues 66–84 (RSQSRSSKHGLQQCSSSPS) are compositionally biased toward polar residues. 6 LRR repeats span residues 140–164 (AGQAGTQLTLRDLNLSQLPPGLHRL), 165–189 (AHLRDLDVADNVNLTRLPEDLSLCK), 191–211 (LERINADGCSIAALPSKIGAL), 212–234 (KNLSEISLAFNELRTLPDSIGQC), 236–257 (SLTTIVVPGCKINKLPASLANL), and 258–282 (TQLKKLDVAANIELSELSPHMNLDD). The 157-residue stretch at 377 to 533 (ITLDRIFKLN…LEGIATVMNQ (157 aa)) folds into the Fido domain.

In the C-terminal section; belongs to the fic family. As to quaternary structure, interacts with several members of the Arabidopsis RLCK VIIa subfamily.

Its subcellular location is the secreted. It localises to the host cell. It is found in the host cell membrane. The enzyme catalyses L-seryl-[protein] + UTP = O-(5'-uridylyl)-L-seryl-[protein] + diphosphate. The catalysed reaction is L-threonyl-[protein] + UTP = uridylyl-L-threonyl-[protein] + diphosphate. Functions both as a virulence and an avirulence gene in Arabidopsis. Causes disease on the Kashmir (Kas) ecotype, but not on Columbia (Col-0) ecotype. Acts by directly uridylylating the conserved phosphorylation sites in the activation loop of a number of host receptor-like cytoplasmic protein kinases (RLCK), including BIK1, RIPK, PBL1 and PBL2, preventing the activation of these kinases and subsequent signal transduction. In susceptible Arabidopsis plants, uridylylation of BIK1 inhibits the PAMP-triggered immunity (PTI) signaling cascade and thereby promotes bacterial virulence. It also inhibits RPM1-dependent effector-triggered immunity (ETI) in mesophyll tissues by targeting RIPK. In contrast, in the resistant ecotype Col-0, xopAC is a major avirulence gene. Uridylylation of PBL2 triggers the PBL2-RKS1 interaction and thus the assembly of the PBL2-RKS1-ZAR1 complex, which, in turn, activates effector-triggered immunity (ETI) against X.campestris. The protein is Uridine 5'-monophosphate transferase of Xanthomonas campestris pv. campestris (strain 8004).